Reading from the N-terminus, the 100-residue chain is ATP synthase subunit c (100 aa).

2 helical membrane-spanning segments follow: residues 27–47 and 72–92; these read SVIAAGIGLGLAALGGAIGMG and FIALAMIEAQVIYALVITLIV.

The protein belongs to the ATPase C chain family. In terms of assembly, F-type ATPases have 2 components, F(1) - the catalytic core - and F(0) - the membrane proton channel. F(1) has five subunits: alpha(3), beta(3), gamma(1), delta(1), epsilon(1). F(0) has three main subunits: a(1), b(2) and c(10-14). The alpha and beta chains form an alternating ring which encloses part of the gamma chain. F(1) is attached to F(0) by a central stalk formed by the gamma and epsilon chains, while a peripheral stalk is formed by the delta and b chains.

It localises to the cell inner membrane. In terms of biological role, f(1)F(0) ATP synthase produces ATP from ADP in the presence of a proton or sodium gradient. F-type ATPases consist of two structural domains, F(1) containing the extramembraneous catalytic core and F(0) containing the membrane proton channel, linked together by a central stalk and a peripheral stalk. During catalysis, ATP synthesis in the catalytic domain of F(1) is coupled via a rotary mechanism of the central stalk subunits to proton translocation. This chain is ATP synthase subunit c, found in Campylobacter curvus (strain 525.92).